The chain runs to 163 residues: Phosphopantetheine adenylyltransferase (163 aa).

ATP-binding residues include Ser10 and His18. Residue Ser10 coordinates substrate. Lys42, Thr75, and Arg89 together coordinate substrate. ATP-binding positions include Gly90–Arg92, Glu100, and Tyr125–Ser131.

It belongs to the bacterial CoaD family. As to quaternary structure, homohexamer. Requires Mg(2+) as cofactor.

The protein resides in the cytoplasm. It carries out the reaction (R)-4'-phosphopantetheine + ATP + H(+) = 3'-dephospho-CoA + diphosphate. It functions in the pathway cofactor biosynthesis; coenzyme A biosynthesis; CoA from (R)-pantothenate: step 4/5. Its function is as follows. Reversibly transfers an adenylyl group from ATP to 4'-phosphopantetheine, yielding dephospho-CoA (dPCoA) and pyrophosphate. This Enterococcus faecalis (strain ATCC 700802 / V583) protein is Phosphopantetheine adenylyltransferase.